We begin with the raw amino-acid sequence, 525 residues long: GMP synthase [glutamine-hydrolyzing] (525 aa).

The Glutamine amidotransferase type-1 domain occupies 9-207; it reads RILILDFGSQ…VRDICQCEAL (199 aa). Cys86 functions as the Nucleophile in the catalytic mechanism. Catalysis depends on residues His181 and Glu183. The GMPS ATP-PPase domain occupies 208 to 400; that stretch reads WTPAKIIDDA…LGLPYDMLYR (193 aa). 235 to 241 serves as a coordination point for ATP; it reads SGGVDSS.

In terms of assembly, homodimer.

The catalysed reaction is XMP + L-glutamine + ATP + H2O = GMP + L-glutamate + AMP + diphosphate + 2 H(+). The protein operates within purine metabolism; GMP biosynthesis; GMP from XMP (L-Gln route): step 1/1. In terms of biological role, catalyzes the synthesis of GMP from XMP. The polypeptide is GMP synthase [glutamine-hydrolyzing] (Escherichia coli O8 (strain IAI1)).